A 606-amino-acid polypeptide reads, in one-letter code: Pyruvate decarboxylase 2 (606 aa).

Residues Asp-68 and His-155 each coordinate substrate. The tract at residues 433–515 is thiamine pyrophosphate binding; the sequence is DSWFNCQKLK…FLINNGGYTI (83 aa). The Mg(2+) site is built by Asp-483, Asn-510, and Gly-512. Glu-516 is a binding site for substrate.

This sequence belongs to the TPP enzyme family. In terms of assembly, homotetramer. A metal cation is required as a cofactor. Requires thiamine diphosphate as cofactor.

The enzyme catalyses a 2-oxocarboxylate + H(+) = an aldehyde + CO2. The protein is Pyruvate decarboxylase 2 (PDC2) of Oryza sativa subsp. indica (Rice).